The primary structure comprises 111 residues: Universal stress protein B (111 aa).

Helical transmembrane passes span 1–21 and 90–110; these read MIST…NMAR and FILT…LLIW.

This sequence belongs to the universal stress protein B family.

It is found in the cell inner membrane. The sequence is that of Universal stress protein B from Escherichia fergusonii (strain ATCC 35469 / DSM 13698 / CCUG 18766 / IAM 14443 / JCM 21226 / LMG 7866 / NBRC 102419 / NCTC 12128 / CDC 0568-73).